A 523-amino-acid chain; its full sequence is Synaptotagmin-10 (523 aa).

The Vesicular segment spans residues 1 to 55 (MSFRKEDGVSSLCQKALHIITELCFAGQVEWDKCSGIFPADRSGQGGGGTDISVS). Positions 13-35 (CQKALHIITELCFAGQVEWDKCS) are cysteine motif. Residues 56-76 (LLAVVVSFCGLALLVVSLFVF) traverse the membrane as a helical segment. The Cytoplasmic portion of the chain corresponds to 77–523 (WKLCWPCWKS…CSSPRPPSTP (447 aa)). Thr-136 is subject to Phosphothreonine. C2 domains follow at residues 231–352 (TCGK…TVWK) and 363–496 (DLGE…THWH). Residues Asp-262, Asp-268, Asp-320, Phe-321, Asp-322, Ser-325, Asp-328, Asp-394, Asp-400, Asp-454, and Asp-456 each coordinate Ca(2+).

This sequence belongs to the synaptotagmin family. As to quaternary structure, homodimer; disulfide-linked via the cysteine motif. Can also form heterodimers with SYT3, SYT6, SYT7 and SYT9. Requires Ca(2+) as cofactor.

The protein resides in the cytoplasmic vesicle. Its subcellular location is the secretory vesicle membrane. Its function is as follows. Ca(2+) sensor specifically required for the Ca(2+)-dependent exocytosis of secretory vesicles containing IGF1 in neurons of the olfactory bulb. Exocytosis of IGF1 is required for sensory perception of smell. Not involved in Ca(2+)-dependent synaptic vesicle exocytosis. Acts through Ca(2+) and phospholipid binding to the C2 domain: Ca(2+) induces binding of the C2-domains to phospholipid membranes and to assembled SNARE-complexes; both actions contribute to triggering exocytosis. The protein is Synaptotagmin-10 (Syt10) of Rattus norvegicus (Rat).